We begin with the raw amino-acid sequence, 238 residues long: Small ribosomal subunit protein uS3 (238 aa).

Positions 39 to 108 (IRKFVKKKLF…NVAVNVIEVK (70 aa)) constitute a KH type-2 domain.

Belongs to the universal ribosomal protein uS3 family. As to quaternary structure, part of the 30S ribosomal subunit. Forms a tight complex with proteins S10 and S14.

Functionally, binds the lower part of the 30S subunit head. Binds mRNA in the 70S ribosome, positioning it for translation. In Alkaliphilus oremlandii (strain OhILAs) (Clostridium oremlandii (strain OhILAs)), this protein is Small ribosomal subunit protein uS3.